A 581-amino-acid chain; its full sequence is Protein alan shepard (581 aa).

The segment covering 1–10 has biased composition (pro residues); it reads MHPRYSPAPP. Positions 1–73 are disordered; sequence MHPRYSPAPP…AVTAAPPTPR (73 aa). Y5 carries the phosphotyrosine modification. Positions 35 to 54 are enriched in polar residues; the sequence is ANNSQQLPPQMPRSQNYANG. The segment covering 55 to 68 has biased composition (low complexity); it reads SSSSAAAASAVTAA. Residues Y128 and Y146 each carry the phosphotyrosine modification. Residues 168–226 show a composition bias toward low complexity; that stretch reads PATTTYGQRVPTAASPSNTNSSSSSNTGSQSGTLSTSLSHTTNTNTNMGPNGTAQNQNQ. Residues 168-234 form a disordered region; it reads PATTTYGQRV…NQQGGGGEQL (67 aa). RRM domains are found at residues 237 to 310 and 316 to 395; these read TNLY…MAKQ and TNLY…FADG. The interval 555 to 581 is disordered; that stretch reads MTDSEQASTAASPDEAYTQYPHQAAPK.

In terms of biological role, has a role in the perception of gravity. This Drosophila willistoni (Fruit fly) protein is Protein alan shepard.